Consider the following 302-residue polypeptide: Zinc import ATP-binding protein ZnuC (302 aa).

The ABC transporter domain maps to 13 to 228; the sequence is VSLANAGVRR…PEYLKLFGRR (216 aa). Residue 45-52 participates in ATP binding; the sequence is GPNGSGKS.

This sequence belongs to the ABC transporter superfamily. Zinc importer (TC 3.A.1.15.5) family. As to quaternary structure, the complex is composed of two ATP-binding proteins (ZnuC), two transmembrane proteins (ZnuB) and a solute-binding protein (ZnuA).

The protein localises to the cell inner membrane. The catalysed reaction is Zn(2+)(out) + ATP(in) + H2O(in) = Zn(2+)(in) + ADP(in) + phosphate(in) + H(+)(in). In terms of biological role, part of the ABC transporter complex ZnuABC involved in zinc import. Responsible for energy coupling to the transport system. This is Zinc import ATP-binding protein ZnuC from Rhizobium meliloti (strain 1021) (Ensifer meliloti).